Here is a 284-residue protein sequence, read N- to C-terminus: HTH-type transcriptional activator RhaR (284 aa).

One can recognise an HTH araC/xylS-type domain in the interval 181-279 (DMLMNALRAS…GVSPSAYRQR (99 aa)). 2 DNA-binding regions (H-T-H motif) span residues 198-219 (EAFCEQHHFSARSLRSRFKEQT) and 246-269 (IGDIAALCGFEDSNYFSVVFHQAF).

As to quaternary structure, binds DNA as a dimer.

It is found in the cytoplasm. Functionally, activates expression of the rhaSR operon in response to L-rhamnose. The chain is HTH-type transcriptional activator RhaR from Pectobacterium carotovorum subsp. carotovorum (strain PC1).